A 491-amino-acid polypeptide reads, in one-letter code: (R)-citramalate synthase CimA (491 aa).

Residues valine 3 to tyrosine 254 enclose the Pyruvate carboxyltransferase domain.

This sequence belongs to the alpha-IPM synthase/homocitrate synthase family. Homodimer.

It catalyses the reaction pyruvate + acetyl-CoA + H2O = (3R)-citramalate + CoA + H(+). The protein operates within amino-acid biosynthesis; L-isoleucine biosynthesis; 2-oxobutanoate from pyruvate: step 1/3. Functionally, catalyzes the condensation of pyruvate and acetyl-coenzyme A to form (R)-citramalate. In Methanocaldococcus jannaschii (strain ATCC 43067 / DSM 2661 / JAL-1 / JCM 10045 / NBRC 100440) (Methanococcus jannaschii), this protein is (R)-citramalate synthase CimA (cimA).